The following is a 102-amino-acid chain: MNKIRKGDEVIVLTGKDKGKRGTVQAVLGDKVAVQGVNIAKKHARPNPMLGTTGGVVDKVMPLHISNVALVDANGKPSRVGIKVEDGKRVRVLKTTGAVVAA.

The protein belongs to the universal ribosomal protein uL24 family. Part of the 50S ribosomal subunit.

Its function is as follows. One of two assembly initiator proteins, it binds directly to the 5'-end of the 23S rRNA, where it nucleates assembly of the 50S subunit. One of the proteins that surrounds the polypeptide exit tunnel on the outside of the subunit. The chain is Large ribosomal subunit protein uL24 from Cupriavidus necator (strain ATCC 17699 / DSM 428 / KCTC 22496 / NCIMB 10442 / H16 / Stanier 337) (Ralstonia eutropha).